The primary structure comprises 637 residues: Extracellular metalloproteinase 10 (637 aa).

An N-terminal signal peptide occupies residues 1–19; it reads MHGLLLAATLLSLPFNAVA. Positions 20 to 245 are excised as a propeptide; that stretch reads HVPPTTGLVR…VHNVVDYVAH (226 aa). An N-linked (GlcNAc...) asparagine glycan is attached at Asn282. His429 is a binding site for Zn(2+). Residue Glu430 is part of the active site. Position 433 (His433) interacts with Zn(2+). A glycan (N-linked (GlcNAc...) asparagine) is linked at Asn502.

It belongs to the peptidase M36 family. Zn(2+) is required as a cofactor.

The protein resides in the secreted. Functionally, secreted metalloproteinase that allows assimilation of proteinaceous substrates. The chain is Extracellular metalloproteinase 10 (MEP10) from Uncinocarpus reesii (strain UAMH 1704).